The chain runs to 197 residues: Phospholipid hydroperoxide glutathione peroxidase GPX4 (197 aa).

Ser-40 is modified (phosphoserine). Sec-73 is a catalytic residue. A non-standard amino acid (selenocysteine) is located at residue Sec-73.

Belongs to the glutathione peroxidase family. Monomer. Has a tendency to form higher mass oligomers. Interacts with FUNDC1; this interaction promotes GPX4 recruitment into mitochondria through TOM/TIM complex where it is degraded by mitophagy. As to expression, widely expressed with the highest levels in testis, heart, cerebrum, ileum, stomach, liver, jejunum and epididymis. Expressed primarily in testis and sperm midpiece (at protein level). Expressed in brain (at protein level). Expressed in heart, liver and kidney (at protein level). Expressed in retina, especially in inner segments of photoreceptor cells (at protein level). Highly expressed during embryogenesis. Down-regulated between 14.5 dpc and 17.5 dpc. In terms of tissue distribution, highly expressed during embryogenesis. In contrast to isoform Mitochondrial and isoform Nuclear, which are down-regulated between 14.5 dpc and 17.5 dpc, remains constant. As to expression, mainly expressed in sperm. Weakly expressed during embryogenesis. Down-regulated between 14.5 dpc and 17.5 dpc.

Its subcellular location is the mitochondrion. The protein localises to the cytoplasm. It is found in the nucleus. The catalysed reaction is a hydroperoxy polyunsaturated fatty acid + 2 glutathione = a hydroxy polyunsaturated fatty acid + glutathione disulfide + H2O. It carries out the reaction 2 glutathione + H2O2 = glutathione disulfide + 2 H2O. The enzyme catalyses tert-butyl hydroperoxide + 2 glutathione = tert-butanol + glutathione disulfide + H2O. It catalyses the reaction cumene hydroperoxide + 2 glutathione = 2-phenylpropan-2-ol + glutathione disulfide + H2O. The catalysed reaction is (9S)-hydroperoxy-(10E,12Z)-octadecadienoate + 2 glutathione = (9S)-hydroxy-(10E,12Z)-octadecadienoate + glutathione disulfide + H2O. It carries out the reaction (13S)-hydroperoxy-(9Z,11E)-octadecadienoate + 2 glutathione = (13S)-hydroxy-(9Z,11E)-octadecadienoate + glutathione disulfide + H2O. The enzyme catalyses (5S)-hydroperoxy-(6E,8Z,11Z,14Z)-eicosatetraenoate + 2 glutathione = (5S)-hydroxy-(6E,8Z,11Z,14Z)-eicosatetraenoate + glutathione disulfide + H2O. It catalyses the reaction (12R)-hydroperoxy-(5Z,8Z,10E,14Z)-eicosatetraenoate + 2 glutathione = (12R)-hydroxy-(5Z,8Z,10E,14Z)-eicosatetraenoate + glutathione disulfide + H2O. The catalysed reaction is (12S)-hydroperoxy-(5Z,8Z,10E,14Z)-eicosatetraenoate + 2 glutathione = (12S)-hydroxy-(5Z,8Z,10E,14Z)-eicosatetraenoate + glutathione disulfide + H2O. It carries out the reaction (15S)-hydroperoxy-(5Z,8Z,11Z,13E)-eicosatetraenoate + 2 glutathione = (15S)-hydroxy-(5Z,8Z,11Z,13E)-eicosatetraenoate + glutathione disulfide + H2O. The enzyme catalyses (5S)-hydroperoxy-(6E,8Z,11Z,14Z,17Z)-eicosapentaenoate + 2 glutathione = (5S)-hydroxy-(6E,8Z,11Z,14Z,17Z)-eicosapentaenoate + glutathione disulfide + H2O. It catalyses the reaction (12S)-hydroperoxy-(5Z,8Z,10E,14Z,17Z)-eicosapentaenoate + 2 glutathione = (12S)-hydroxy-(5Z,8Z,10E,14Z,17Z)-eicosapentaenoate + glutathione disulfide + H2O. The catalysed reaction is (15S)-hydroperoxy-(5Z,8Z,11Z,13E,17Z)-eicosapentaenoate + 2 glutathione = (15S)-hydroxy-(5Z,8Z,11Z,13E,17Z)-eicosapentaenoate + glutathione disulfide + H2O. It carries out the reaction (15S)-hydroperoxy-(11Z,13E)-eicosadienoate + 2 glutathione = (15S)-hydroxy-(11Z,13E)-eicosadienoate + glutathione disulfide + H2O. The enzyme catalyses (17S)-hydroperoxy-(4Z,7Z,10Z,13Z,15E,19Z)-docosahexaenoate + 2 glutathione = (17S)-hydroxy-(4Z,7Z,10Z,13Z,15E,19Z)-docosahexaenoate + glutathione disulfide + H2O. It catalyses the reaction a hydroperoxy-1,2-diacyl-glycero-3-phosphocholine + 2 glutathione = a hydroxy-1,2-diacyl-glycero-3-phosphocholine + glutathione disulfide + H2O. In terms of biological role, essential antioxidant peroxidase that directly reduces phospholipid hydroperoxide even if they are incorporated in membranes and lipoproteins. Can also reduce fatty acid hydroperoxide, cholesterol hydroperoxide and thymine hydroperoxide. Plays a key role in protecting cells from oxidative damage by preventing membrane lipid peroxidation. Required to prevent cells from ferroptosis, a non-apoptotic cell death resulting from an iron-dependent accumulation of lipid reactive oxygen species. The presence of selenocysteine (Sec) versus Cys at the active site is essential for life: it provides resistance to overoxidation and prevents cells against ferroptosis. The presence of Sec at the active site is also essential for the survival of a specific type of parvalbumin-positive interneurons, thereby preventing against fatal epileptic seizures. May be required to protect cells from the toxicity of ingested lipid hydroperoxides. Required for normal sperm development and male fertility. Essential for maturation and survival of photoreceptor cells. Plays a role in a primary T-cell response to viral and parasitic infection by protecting T-cells from ferroptosis and by supporting T-cell expansion. Plays a role of glutathione peroxidase in platelets in the arachidonic acid metabolism. Reduces hydroperoxy ester lipids formed by a 15-lipoxygenase that may play a role as down-regulator of the cellular 15-lipoxygenase pathway. Can also reduce small soluble hydroperoxides such as H2O2 and tert-butyl hydroperoxide. Its function is as follows. Specifically able to suppress the production of leukotriene and prostaglandin in response to several stimuli by reducing fatty acid hydroperoxide. Specifically required to prevent mitochondrial cell death by mediating reduction of cardiolipin hydroperoxide. Also required for normal sperm development and male fertility. Functionally, required for male fertility by stabilizing the condensed chromatin in sperm nuclei. The protein is Phospholipid hydroperoxide glutathione peroxidase GPX4 of Mus musculus (Mouse).